Consider the following 133-residue polypeptide: Histone H2A.1 (133 aa).

The disordered stretch occupies residues 1–23; the sequence is MSTTGKGGKAKGKTASSKQVSRS. N-acetylserine is present on Ser2. Lys6, Lys9, Lys11, Lys13, and Lys18 each carry N6-acetyllysine. Position 123 is a phosphoserine (Ser123). Lys124 is covalently cross-linked (Glycyl lysine isopeptide (Lys-Gly) (interchain with G-Cter in ubiquitin)). Ser129 is subject to Phosphoserine.

This sequence belongs to the histone H2A family. The nucleosome is a histone octamer containing two molecules each of H2A, H2B, H3 and H4 assembled in one H3-H4 heterotetramer and two H2A-H2B heterodimers. The octamer wraps approximately 147 bp of DNA. Post-translationally, monoubiquitination of Lys-124 gives a specific tag for epigenetic transcriptional repression. In terms of processing, acetylation occurs almost exclusively in the MAC.

It is found in the nucleus. The protein resides in the chromosome. Functionally, core component of nucleosome. Nucleosomes wrap and compact DNA into chromatin, limiting DNA accessibility to the cellular machineries which require DNA as a template. Histones thereby play a central role in transcription regulation, DNA repair, DNA replication and chromosomal stability. DNA accessibility is regulated via a complex set of post-translational modifications of histones, also called histone code, and nucleosome remodeling. In Tetrahymena pyriformis, this protein is Histone H2A.1 (HTA2).